A 141-amino-acid chain; its full sequence is ATP synthase epsilon chain, chloroplastic (141 aa).

It belongs to the ATPase epsilon chain family. F-type ATPases have 2 components, F(1) - the catalytic core - and F(0) - the membrane proton channel. F(1) has five subunits: alpha(3), beta(3), gamma(1), delta(1), epsilon(1). F(0) has four main subunits: a(1), b(1), b'(1) and c(10-14). The alpha and beta chains form an alternating ring which encloses part of the gamma chain. F(1) is attached to F(0) by a central stalk formed by the gamma and epsilon chains, while a peripheral stalk is formed by the delta, b and b' chains.

The protein localises to the plastid. The protein resides in the chloroplast thylakoid membrane. F(1)F(0) ATP synthase produces ATP from ADP in the presence of a proton or sodium gradient. F-type ATPases consist of two structural domains, F(1) containing the extramembraneous catalytic core and F(0) containing the membrane proton channel, linked together by a central stalk and a peripheral stalk. During catalysis, ATP synthesis in the catalytic domain of F(1) is coupled via a rotary mechanism of the central stalk subunits to proton translocation. The chain is ATP synthase epsilon chain, chloroplastic from Chlamydomonas reinhardtii (Chlamydomonas smithii).